We begin with the raw amino-acid sequence, 244 residues long: Cell division protein ZapD (244 aa).

Belongs to the ZapD family. Interacts with FtsZ.

The protein resides in the cytoplasm. Its function is as follows. Cell division factor that enhances FtsZ-ring assembly. Directly interacts with FtsZ and promotes bundling of FtsZ protofilaments, with a reduction in FtsZ GTPase activity. The chain is Cell division protein ZapD from Shewanella baltica (strain OS223).